The primary structure comprises 218 residues: Outer-membrane lipoprotein LolB (218 aa).

A signal peptide spans 1-20 (MSQVIRTLALTGLALAGLSG). Cys21 is lipidated: N-palmitoyl cysteine. The S-diacylglycerol cysteine moiety is linked to residue Cys21.

This sequence belongs to the LolB family. As to quaternary structure, monomer.

Its subcellular location is the cell outer membrane. Plays a critical role in the incorporation of lipoproteins in the outer membrane after they are released by the LolA protein. This Xanthomonas campestris pv. campestris (strain B100) protein is Outer-membrane lipoprotein LolB.